An 82-amino-acid polypeptide reads, in one-letter code: MAKISCSYFLVLMLVFSVFSLVEKTKGKRHCSTIILPESPCVPQDCVEYCFEEYNGGGTCIASKTGRTTNCMCTYNCHGNNL.

Positions 1–27 (MAKISCSYFLVLMLVFSVFSLVEKTKG) are cleaved as a signal peptide. 4 disulfides stabilise this stretch: cysteine 31/cysteine 77, cysteine 41/cysteine 60, cysteine 46/cysteine 71, and cysteine 50/cysteine 73.

This sequence belongs to the DEFL family. In terms of tissue distribution, expressed in flower buds, but not in stems, roots or rosette leaves.

It is found in the secreted. The protein is Defensin-like protein 156 (LCR21) of Arabidopsis thaliana (Mouse-ear cress).